Reading from the N-terminus, the 267-residue chain is MSFDVYVMRVFGKSRGSWEAGMGVSAGLEVAAGSVASALAAQEGGAMRVELCHGLEGGGLTPSYGMLAVVRERLHIPLYVLIRPRGGDFVFSEEEMEVMCGDVECCVRLGCDGVVLGALDPAGEVDMGMMRVLIAAAGSLGVTFHRAIDVSADPGRTLEDVIALGCERVLTSGGRSSALEGAETIAALVAQAAGRVVVMPGAGVSAGNVLELRVRTGAHEFHASARSVVAARRLGAHPYIHDLGGDYDCTDADKVRQLVRLLSQGAS.

Belongs to the CutC family.

It localises to the cytoplasm. The sequence is that of PF03932 family protein CutC from Xylella fastidiosa (strain Temecula1 / ATCC 700964).